Reading from the N-terminus, the 201-residue chain is PLASMODESMATA CALLOSE-BINDING PROTEIN 1 (201 aa).

Residues 1–19 form the signal peptide; sequence MAALVLSLLLLSLAGHSSA. Cys22 and Cys84 are joined by a disulfide. Positions 107-141 are enriched in low complexity; that stretch reads SASGSSGSTTVTPGTTNPKGSPTTTTLPGSGTNSP. Positions 107–164 are disordered; it reads SASGSSGSTTVTPGTTNPKGSPTTTTLPGSGTNSPYSGNPTNGVFGGNSTGGTTGTGI. Over residues 150–161 the composition is skewed to gly residues; that stretch reads VFGGNSTGGTTG. The N-linked (GlcNAc...) asparagine glycan is linked to Asn154. Residue Ser172 is the site of GPI-anchor amidated serine attachment. Positions 173-201 are cleaved as a propeptide — removed in mature form; that stretch reads SAFALKNSSKLFICLLLIASSGFCSFLML. A glycan (N-linked (GlcNAc...) asparagine) is linked at Asn179.

Contains two additional disulfide bonds. As to expression, expressed in the shoot apical region and in young leaves but also detected in the laminar and vasculature of mature leaves.

The protein resides in the cell membrane. It localises to the cell junction. The protein localises to the plasmodesma. Its function is as follows. Able to bind (1-&gt;3)-beta-D-glucans (laminarin). Probably involved in cell-to-cell trafficking regulation. This chain is PLASMODESMATA CALLOSE-BINDING PROTEIN 1 (PDCB1), found in Arabidopsis thaliana (Mouse-ear cress).